We begin with the raw amino-acid sequence, 1016 residues long: EMILIN-1 (1016 aa).

Residues 1–21 (MAPRTLWSCYLCCLLTAAAGA) form the signal peptide. Positions 56–131 (HRNWCAYVVT…QGYGGDDCAE (76 aa)) constitute an EMI domain. 3 cysteine pairs are disulfide-bonded: Cys-60–Cys-121, Cys-85–Cys-92, and Cys-120–Cys-129. The tract at residues 135–182 (PALGPASSTPRPLARPARPNLSGSSAGSPLSGLGGEGPGESEKVQQLE) is disordered. Over residues 139–165 (PASSTPRPLARPARPNLSGSSAGSPLS) the composition is skewed to low complexity. N-linked (GlcNAc...) asparagine glycosylation is present at Asn-154. Positions 216–256 (TAFNGRQQPADAAARPGVHETLNEIQHQLQLLDTRVSTHDQ) form a coiled coil. Disordered stretches follow at residues 257 to 288 (ELGHLNNHHGGSSSSGGSRAPAPASAPPGPSE) and 383 to 402 (RGTELGGAAGQGGHPPGYTS). The span at 266–279 (GGSSSSGGSRAPAP) shows a compositional bias: low complexity. Residues 356–420 (PELGRRLAEL…EDRFNSTLGP (65 aa)) are a coiled coil. Positions 386–397 (ELGGAAGQGGHP) are enriched in gly residues. An N-linked (GlcNAc...) asparagine glycan is attached at Asn-415. The disordered stretch occupies residues 416-435 (STLGPSEEQEESWPGAPGGL). Residues Asn-455 and Asn-561 are each glycosylated (N-linked (GlcNAc...) asparagine). Positions 576 to 603 (AHGDEGCGACGGVQEELGRLRDGVERCS) form a coiled coil. An N-linked (GlcNAc...) asparagine glycan is attached at Asn-658. Residues 685-752 (IISEINRLQQ…GLQGLREGLS (68 aa)) adopt a coiled-coil conformation. Asn-766 and Asn-794 each carry an N-linked (GlcNAc...) asparagine glycan. 2 disordered regions span residues 811 to 863 (DLTG…VEGA) and 942 to 961 (RVDSGGYEPEGLENKPVAES). Positions 814–864 (GPAGEAGPPGPPGLQGPPGPAGPPGSPGKDGQEGPIGPPGPQGEQGVEGAP) constitute a Collagen-like domain. A compositionally biased stretch (pro residues) spans 821-839 (PPGPPGLQGPPGPAGPPGS). Residues 835-857 (GPPGSPGKDGQEGPIGPPGPQGE) adopt a coiled-coil conformation. Residues 866–1013 (APVPQVAFSA…GALLYGDPEL (148 aa)) enclose the C1q domain.

Homotrimer associated through a moderately stable interaction of the C-terminal globular C1q domains, allowing the nucleation of the triple helix and then a further quaternary assembly to higher-order polymers via intermolecular disulfide bonds. Interacts with EMILIN2. Interacts with EFEMP2; this interaction promotes the incorporation of EFEMP2 into the extracellular matrix. As to expression, distributed in tissues where resilience and elastic recoil are prominent. Highest levels in the adult small intestine, aorta, lung, uterus, and appendix and in the fetal spleen, kidney, lung, and heart; intermediate expression was detected in adult liver, ovary, colon, stomach, lymph node and spleen; adult heart, bladder, prostate, adrenal gland, mammary gland, placenta and kidney showed low expression whereas a series of other adult tissues, including skeletal muscle and different regions of adult brain show no expression. Detected in intramuscular nerve bundles, where it particularly localizes in the epineurium, the most external layer of dense connective tissue enclosing the nerve.

It localises to the secreted. The protein resides in the extracellular space. It is found in the extracellular matrix. In terms of biological role, involved in elastic and collagen fibers formation. It is required for EFEMP2 deposition into the extracellular matrix, and collagen network assembly and cross-linking via protein-lysine 6-oxidase/LOX activity. May be responsible for anchoring smooth muscle cells to elastic fibers, and may be involved in the processes that regulate vessel assembly. Has cell adhesive capacity. The protein is EMILIN-1 (EMILIN1) of Homo sapiens (Human).